A 501-amino-acid polypeptide reads, in one-letter code: Serine/threonine-protein kinase pelle (501 aa).

A disordered region spans residues 1–25 (MSGVQTAEAEAQAQNQANGNRTRSR). Positions 7 to 18 (AEAEAQAQNQAN) are enriched in low complexity. One can recognise a Death domain in the interval 55 to 121 (WQQLATAVKL…NAMRLIKDYV (67 aa)). Residues 144–176 (DSSAKVNNGPPFPSSSGVSNSNNNRTSTTATEE) form a disordered region. Residues 149–167 (VNNGPPFPSSSGVSNSNNN) show a composition bias toward low complexity. Positions 213–499 (WSPDNRLGQG…AVLKRFEPFV (287 aa)) constitute a Protein kinase domain. Residues 219 to 227 (LGQGGFGDV) and Lys-240 each bind ATP. Asp-346 acts as the Proton acceptor in catalysis. ATP-binding positions include 348-351 (KPAN) and Asp-364.

This sequence belongs to the protein kinase superfamily. TKL Ser/Thr protein kinase family. Pelle subfamily. In terms of assembly, interacts (via Death domain) with tub (via Death domain). Interacts with Pellino (Pli).

Its subcellular location is the cell membrane. It localises to the cytoplasm. It catalyses the reaction L-seryl-[protein] + ATP = O-phospho-L-seryl-[protein] + ADP + H(+). It carries out the reaction L-threonyl-[protein] + ATP = O-phospho-L-threonyl-[protein] + ADP + H(+). Plays an essential role in the Tl receptor signaling pathway that establishes embryonic dorsoventral polarity; the signal directs import of dl into ventral and ventrolateral nuclei, thereby establishing dorsoventral polarity. Tub recruits pll to the plasma membrane and protein-protein interaction activates pll. This is Serine/threonine-protein kinase pelle (pll) from Drosophila melanogaster (Fruit fly).